The following is a 486-amino-acid chain: MSSSSKIDSEKPVMVSESLFSTKTPIKTVKRQIFSSSPKPESVIKLPERFEILEEFFNGLDTAIRLLKLKGSSTTYANICPKIEYLTNRIFSYDHLAQMKHIYPEAIELKRVLKFVEDTCCMKPRLHIKLNTDAIVVEDTICGTKYMELRKVFHSKLVDFRKAHPKDEIPKELLPEPFNSPQRDSYSGIVSVGLGEPKLEVGGFDVHMEEIEQEEQDVNKVIPDSTLSHIESRIVETPVKDLSTPSKDLSTPIRLMSATPTLQLSKRCIELTPEGGDDNSLRSTNSLARGPSRSLNFDTFEEDAIEKDDIGNESDDKGINYEEDGLLQSVKGPSRSLNFDTLEEETIVKDDISNESGDEKSNYEGDNASDDDSLLQSMIERPKTEPEKHNLPQLVNLIHRVFHSTNRTVITKEELLYKIIANQINITDRREVEEQLSLMLQLVPDWISETKASSGDLLVRINKMSTAETVRARLEEATSHDISLIY.

Disordered regions lie at residues 273–294 (PEGG…PSRS) and 348–371 (VKDD…ASDD). Polar residues predominate over residues 281-294 (LRSTNSLARGPSRS). The span at 348 to 363 (VKDDISNESGDEKSNY) shows a compositional bias: basic and acidic residues.

It belongs to the Cdt1 family. Expressed in proliferating (e.g. shoot and root apical meristems, organ primordia, guard cells and stomatal lineage) and endoreplicating cells (e.g. developing trichomes).

It localises to the nucleus. Member of the pre-replication complex. Regulates endoreduplication. Involved in the coordination of cell and plastid division. This Arabidopsis thaliana (Mouse-ear cress) protein is CDT1-like protein b (CDT1B).